The following is a 116-amino-acid chain: Cell division protein FtsL (116 aa).

Over 1–24 (MMLTNRQIRVRLFESLKNSFFKKT) the chain is Cytoplasmic. Residues 25 to 45 (VGISFALLFILLITAFSLIVV) traverse the membrane as a helical segment. The Periplasmic segment spans residues 46–116 (RFEYKLQLNE…NEQKEELNNE (71 aa)).

Belongs to the FtsL family. Part of a complex composed of FtsB, FtsL and FtsQ.

It is found in the cell inner membrane. Its function is as follows. Essential cell division protein. May link together the upstream cell division proteins, which are predominantly cytoplasmic, with the downstream cell division proteins, which are predominantly periplasmic. The protein is Cell division protein FtsL of Francisella tularensis subsp. tularensis (strain SCHU S4 / Schu 4).